Here is a 271-residue protein sequence, read N- to C-terminus: Dioscorin dioA3 (271 aa).

The N-terminal stretch at M1–S21 is a signal peptide. In terms of domain architecture, Alpha-carbonic anhydrase spans D28–E262. C53 and C212 form a disulfide bridge. Residue H94 is the Proton acceptor of the active site. L-ascorbate is bound by residues D95, H120–H122, Q139, and T208–A209.

It belongs to the alpha-carbonic anhydrase family. In terms of assembly, monomer. Homodimer. In terms of processing, not glycosylated. In terms of tissue distribution, expressed in tuber (at protein level).

The enzyme catalyses hydrogencarbonate + H(+) = CO2 + H2O. The catalysed reaction is 2 monodehydro-L-ascorbate radical + NADH + H(+) = 2 L-ascorbate + NAD(+). Its activity is regulated as follows. The carbonate dehydratase activity is not substantially changed by the addition of Zn(2+). Storage protein of tuber. Involved in protection against oxidative stress. Has carbonate dehydratase, trypsin inhibitor, dehydroascorbate (DHA) reductase and monodehydroascorbate (MDA) reductase activities. Catalyzes the reactions of carbonate dehydratase and DHA reductase independently of zinc and glutathione (GSH). The coupled reaction is capable of recycling a plant antioxidant ascorbate using ubiquitous compounds H(2)O and CO(2). Exhibits antioxidant activity. Able to scavenge 1,1-diphenyl-2-picrylhydrazyl (DPPH) radical. Exhibits immunomodulatory activity. Activates Toll-like receptor 4 signaling pathways by up-regulating the gene expression of pro-inflammatory cytokines, such as tumor necrosis factor alpha, interleukin-1 beta and interleukin-6, and chemokines RANTES and MCP-1, in mouse RAW 264.7 macrophages. Stimulates the phagocytosis of E.coli by the LPS-treated mouse macrophages. In Dioscorea japonica (Japanese yam), this protein is Dioscorin dioA3.